A 377-amino-acid polypeptide reads, in one-letter code: Alanine racemase (377 aa).

K33 (proton acceptor; specific for D-alanine) is an active-site residue. K33 bears the N6-(pyridoxal phosphate)lysine mark. R134 provides a ligand contact to substrate. The Proton acceptor; specific for L-alanine role is filled by Y267. A substrate-binding site is contributed by M315.

This sequence belongs to the alanine racemase family. Pyridoxal 5'-phosphate serves as cofactor.

The catalysed reaction is L-alanine = D-alanine. It participates in amino-acid biosynthesis; D-alanine biosynthesis; D-alanine from L-alanine: step 1/1. In terms of biological role, catalyzes the interconversion of L-alanine and D-alanine. May also act on other amino acids. The chain is Alanine racemase (alr) from Treponema pallidum subsp. pallidum (strain SS14).